A 340-amino-acid chain; its full sequence is Ferrochelatase (340 aa).

Positions 189 and 292 each coordinate Fe cation.

Belongs to the ferrochelatase family.

Its subcellular location is the cytoplasm. The catalysed reaction is heme b + 2 H(+) = protoporphyrin IX + Fe(2+). It functions in the pathway porphyrin-containing compound metabolism; protoheme biosynthesis; protoheme from protoporphyrin-IX: step 1/1. Catalyzes the ferrous insertion into protoporphyrin IX. In Pseudomonas syringae pv. tomato (strain ATCC BAA-871 / DC3000), this protein is Ferrochelatase.